The sequence spans 206 residues: Small ribosomal subunit protein uS4 (206 aa).

The region spanning 96–157 (SRLDNVVYRM…KAQKQLRVQA (62 aa)) is the S4 RNA-binding domain.

It belongs to the universal ribosomal protein uS4 family. Part of the 30S ribosomal subunit. Contacts protein S5. The interaction surface between S4 and S5 is involved in control of translational fidelity.

Its function is as follows. One of the primary rRNA binding proteins, it binds directly to 16S rRNA where it nucleates assembly of the body of the 30S subunit. With S5 and S12 plays an important role in translational accuracy. This is Small ribosomal subunit protein uS4 from Alkalilimnicola ehrlichii (strain ATCC BAA-1101 / DSM 17681 / MLHE-1).